Consider the following 211-residue polypeptide: V-type ATP synthase subunit D (211 aa).

It belongs to the V-ATPase D subunit family.

Functionally, produces ATP from ADP in the presence of a proton gradient across the membrane. This Enterococcus faecalis (strain ATCC 700802 / V583) protein is V-type ATP synthase subunit D.